Reading from the N-terminus, the 205-residue chain is DNA-directed RNA polymerase subunit 5 (205 aa).

The protein belongs to the archaeal Rpo5/eukaryotic RPB5 RNA polymerase subunit family.

Its subcellular location is the virion. It catalyses the reaction RNA(n) + a ribonucleoside 5'-triphosphate = RNA(n+1) + diphosphate. Its function is as follows. DNA-dependent RNA polymerase catalyzes the transcription of DNA into RNA using the four ribonucleoside triphosphates as substrates. This chain is DNA-directed RNA polymerase subunit 5, found in Acanthamoeba polyphaga (Amoeba).